Here is a 421-residue protein sequence, read N- to C-terminus: Peptide chain release factor subunit 1 (421 aa).

It belongs to the eukaryotic release factor 1 family. As to quaternary structure, heterodimer of two subunits, one of which binds GTP.

The protein resides in the cytoplasm. Its function is as follows. Directs the termination of nascent peptide synthesis (translation) in response to the termination codons UAA, UAG and UGA. The sequence is that of Peptide chain release factor subunit 1 (prf1) from Methanocaldococcus jannaschii (strain ATCC 43067 / DSM 2661 / JAL-1 / JCM 10045 / NBRC 100440) (Methanococcus jannaschii).